The sequence spans 206 residues: MLKKLDSLLTVAGITLPDQQKHQLIGYVELLDKWNKAYNLTSVRDPQQMLVRHILDSIVVNPHLQGSRFIDVGTGPGLPGIPLAIVRPDAHFTLLDSLGKRVRFLRQVQHELGLNNIEPVQSRVEAFTSEPPFDGVISRAFASLQDMLSWCHHLPAKPEGRFYALKGVRPDDELAVLPEDIVLESVIKLDVPELDGERHLIILKSN.

Residues glycine 73, leucine 78, 124–125 (VE), and arginine 139 contribute to the S-adenosyl-L-methionine site.

It belongs to the methyltransferase superfamily. RNA methyltransferase RsmG family.

Its subcellular location is the cytoplasm. It carries out the reaction guanosine(527) in 16S rRNA + S-adenosyl-L-methionine = N(7)-methylguanosine(527) in 16S rRNA + S-adenosyl-L-homocysteine. In terms of biological role, specifically methylates the N7 position of guanine in position 527 of 16S rRNA. The sequence is that of Ribosomal RNA small subunit methyltransferase G from Yersinia pseudotuberculosis serotype O:1b (strain IP 31758).